The primary structure comprises 216 residues: SPbeta prophage-derived uncharacterized protein YomX (216 aa).

This Bacillus subtilis (strain 168) protein is SPbeta prophage-derived uncharacterized protein YomX (yomX).